The sequence spans 21 residues: Malate dehydrogenase (21 aa).

11–17 (GAAGQIA) serves as a coordination point for NAD(+).

This sequence belongs to the LDH/MDH superfamily. MDH type 2 family.

The catalysed reaction is (S)-malate + NAD(+) = oxaloacetate + NADH + H(+). Its function is as follows. Catalyzes the reversible oxidation of malate to oxaloacetate. The protein is Malate dehydrogenase (mdh) of Vogesella indigofera (Pseudomonas indigofera).